A 534-amino-acid chain; its full sequence is NAD(P)H-quinone oxidoreductase subunit 2 (534 aa).

Helical transmembrane passes span 15-35 (ILPEGIVILTLLGVLIVDLIL), 42-62 (WIGYLAIAGLFTSIVALYFQW), 79-99 (LSIVFRGIIALSAAVTILMSI), 109-129 (LAEFIAILLSATLGGMFLSGA), 132-152 (LVMIFISLETLSISSYLLTGY), 167-187 (LLIGASSTAVFLYGVSLLYGL), 210-230 (LGLVIALVFAIAGIGFKISAA), 244-264 (PTPVIAFLSVGSKAAGFALAI), 280-300 (FVFTALAVLSMILGNVVALAQ), 306-326 (MLAYSSIAQAGFVMIGLIAGT), 334-354 (IFYLLVYLFMNLCGFTCIILF), 378-398 (LGLSIALLSLGGIPPLAGFFG), 410-432 (GLYWLVLLGLVTTVVSIYYYIRV), and 466-486 (VGLVITLIATSLAGILSNPLF).

This sequence belongs to the complex I subunit 2 family. In terms of assembly, NDH-1 can be composed of about 15 different subunits; different subcomplexes with different compositions have been identified which probably have different functions.

It localises to the cellular thylakoid membrane. The catalysed reaction is a plastoquinone + NADH + (n+1) H(+)(in) = a plastoquinol + NAD(+) + n H(+)(out). The enzyme catalyses a plastoquinone + NADPH + (n+1) H(+)(in) = a plastoquinol + NADP(+) + n H(+)(out). Its function is as follows. NDH-1 shuttles electrons from an unknown electron donor, via FMN and iron-sulfur (Fe-S) centers, to quinones in the respiratory and/or the photosynthetic chain. The immediate electron acceptor for the enzyme in this species is believed to be plastoquinone. Couples the redox reaction to proton translocation, and thus conserves the redox energy in a proton gradient. Cyanobacterial NDH-1 also plays a role in inorganic carbon-concentration. This is NAD(P)H-quinone oxidoreductase subunit 2 from Nostoc punctiforme (strain ATCC 29133 / PCC 73102).